The sequence spans 69 residues: Brevinin-1Pb (69 aa).

An N-terminal signal peptide occupies residues 1 to 20 (MFTLNKFLLLLFFLGTINLS). Positions 21–43 (FCEEENAEEERIDEPDETDVEVE) are excised as a propeptide. A disulfide bond links Cys63 and Cys69.

Expressed by the skin glands.

It is found in the secreted. Antibacterial activity against Gram-positive bacterium S.aureus and Gram-negative bacterium E.coli. Has activity against C.albicans. The sequence is that of Brevinin-1Pb from Lithobates pipiens (Northern leopard frog).